Reading from the N-terminus, the 884-residue chain is Protein argonaute-4 (884 aa).

The PAZ domain occupies 242–361; sequence PVIEFMCEVL…LPLEVCNIVA (120 aa). Positions 532-843 constitute a Piwi domain; that stretch reads LIVVILPGKT…VAFRARYHLV (312 aa). The segment at 848-870 is disordered; that stretch reads DSAEGSHVSGQSNGRDPQALAKA.

This sequence belongs to the argonaute family. Ago subfamily.

The protein localises to the cytoplasm. It localises to the P-body. In terms of biological role, required for RNA-mediated gene silencing (RNAi). Binds to short RNAs such as microRNAs (miRNAs) and represses the translation of mRNAs which are complementary to them. Lacks endonuclease activity and does not appear to cleave target mRNAs. The chain is Protein argonaute-4 (ago4) from Xenopus laevis (African clawed frog).